The primary structure comprises 420 residues: Carbohydrate sulfotransferase 1 (420 aa).

Position 1 (Met-1) is a topological domain, cytoplasmic. Residues 2–23 (QCSWKAVILLALVSIAIQYTAI) traverse the membrane as a helical; Signal-anchor for type II membrane protein segment. The Lumenal segment spans residues 24–420 (RTFTAKPFHI…IEDKTFIPFL (397 aa)). A glycan (N-linked (GlcNAc...) asparagine) is linked at Asn-64. 77–83 (TRSGSSF) is a binding site for 3'-phosphoadenylyl sulfate. N-linked (GlcNAc...) asparagine glycosylation is found at Asn-153 and Asn-197. 242-250 (RDPRGILSS) is a binding site for 3'-phosphoadenylyl sulfate. Residues Asn-342 and Asn-405 are each glycosylated (N-linked (GlcNAc...) asparagine).

This sequence belongs to the sulfotransferase 1 family. Gal/GlcNAc/GalNAc subfamily.

It localises to the golgi apparatus membrane. It catalyses the reaction 3'-phosphoadenylyl sulfate + keratan = adenosine 3',5'-bisphosphate + keratan 6'-sulfate.. In terms of biological role, sulfotransferase that utilizes 3'-phospho-5'-adenylyl sulfate (PAPS) as sulfonate donor to catalyze the transfer of sulfate to position 6 of galactose (Gal) residues of keratan. In Danio rerio (Zebrafish), this protein is Carbohydrate sulfotransferase 1 (chst1).